A 453-amino-acid polypeptide reads, in one-letter code: Protein vestigial (453 aa).

Residues 145–279 (AAGHSLHSSH…GGGLAGSGQG (135 aa)) form a disordered region. Basic residues predominate over residues 151-177 (HSSHRTHAHSLAHAHTHPHSHTHTHTH). Positions 178–193 (QTKEEDLIVPRSEAEA) are enriched in basic and acidic residues. Gly residues-rich tracts occupy residues 227-253 (HGGG…GGTG) and 267-278 (GSGGGGLAGSGQ). The segment at 279-335 (GQAQYLSASCVVFTNYSGDTASQVDEHFSRALNYNNKDSKESSSPMSNRNFPPSFWN) is ser-rich sd binding domain.

As to quaternary structure, the Ser-rich protein domain within the C-terminal region interacts with the C-terminus of sd to form a complex which acts as a selector for wing development. Interacts with Dhfr. In terms of tissue distribution, expressed in the developing wing primordia initially along the D/V wing boundary, and by the late third larval instar, maximal expression is seen in cells at the D/V wing disk boundary. Less expression is seen in cells located farther from this boundary.

It is found in the nucleus. Functionally, involved in determining which thoracic imaginal disk cells will form wings and halteres, perhaps by interacting with other nuclear regulatory proteins. When in combination with scalloped (sd), it acts as a transcriptional activation complex that regulates gene expression in the wing. Binding to sd switches the DNA target selectivity of sd. Required and sufficient for cell proliferation at the dorsal/ventral (D/V) boundary of the wing imaginal disk. Also required for cell proliferation in the wing imaginal disk, mediated via activation of E2f. By interacting with Dhfr, may control genes involved in DNA replication. This Drosophila melanogaster (Fruit fly) protein is Protein vestigial (vg).